The sequence spans 840 residues: Leucine--tRNA ligase (840 aa).

Positions 44 to 55 (PYPSANGLHVGH) match the 'HIGH' region motif. The 'KMSKS' region motif lies at 617–621 (KMSKS). Position 620 (K620) interacts with ATP.

This sequence belongs to the class-I aminoacyl-tRNA synthetase family.

The protein localises to the cytoplasm. It catalyses the reaction tRNA(Leu) + L-leucine + ATP = L-leucyl-tRNA(Leu) + AMP + diphosphate. This is Leucine--tRNA ligase from Borreliella burgdorferi (strain ATCC 35210 / DSM 4680 / CIP 102532 / B31) (Borrelia burgdorferi).